The following is a 527-amino-acid chain: Catalase (527 aa).

Positions 1 to 22 (MADNRDPASDQMKHWKEQRAAQ) are enriched in basic and acidic residues. Residues 1 to 32 (MADNRDPASDQMKHWKEQRAAQKPDILTTGSG) are disordered. Ala-2 is modified (N-acetylalanine). Residue Ser-9 is modified to Phosphoserine. An N6-succinyllysine modification is found at Lys-13. Residues His-75 and Asn-148 contribute to the active site. NADP(+)-binding residues include His-194, Ser-201, Arg-203, and Asn-213. Lys-221 carries the post-translational modification N6-succinyllysine. Lys-233 is subject to N6-acetyllysine. Residues Lys-237, Trp-303, and His-305 each coordinate NADP(+). Tyr-358 serves as a coordination point for heme. Residues Ser-417 and Ser-434 each carry the phosphoserine modification. An N6-acetyllysine; alternate modification is found at Lys-480. Lys-480 carries the N6-succinyllysine; alternate modification. Lys-499 bears the N6-acetyllysine mark. Residue Thr-511 is modified to Phosphothreonine. Ser-517 carries the post-translational modification Phosphoserine. Residues 524–527 (KANL) carry the Microbody targeting signal; atypical motif.

Belongs to the catalase family. Homotetramer. Interacts (via microbody targeting signal) with PEX5, monomeric form interacts with PEX5, leading to its translocation into peroxisomes. Heme serves as cofactor. It depends on NADP(+) as a cofactor.

The protein localises to the peroxisome matrix. It catalyses the reaction 2 H2O2 = O2 + 2 H2O. Its function is as follows. Catalyzes the degradation of hydrogen peroxide (H(2)O(2)) generated by peroxisomal oxidases to water and oxygen, thereby protecting cells from the toxic effects of hydrogen peroxide. Promotes growth of cells including T-cells, B-cells, myeloid leukemia cells, melanoma cells, mastocytoma cells and normal and transformed fibroblast cells. This is Catalase (CAT) from Sus scrofa (Pig).